The chain runs to 138 residues: Cytosolic calcium-binding protein 2 (138 aa).

Low complexity predominate over residues 31 to 41; sequence TEVTQQPEESV. The tract at residues 31–122 is disordered; it reads TEVTQQPEES…KKTEVVEEKQ (92 aa). Repeat copies occupy residues 62 to 68, 71 to 75, 92 to 98, 109 to 114, 118 to 122, and 131 to 135. Positions 62-135 are 6 X 5 AA approximate repeats of V-E-E-K-K; that stretch reads VEEAEKKDEE…AAAEEVAVEK (74 aa). The span at 64-85 shows a compositional bias: basic and acidic residues; sequence EAEKKDEETEKKTEEKDEKTEV. Residues 110-122 are compositionally biased toward basic and acidic residues; it reads EEEKKTEVVEEKQ.

Predominantly expressed in roots (e.g. in endodermis in the stele) and stems, to a lower extent in shoots, flowers and siliques, and, at low levels, in leaves.

The protein resides in the cytoplasm. It localises to the cytosol. In terms of biological role, binds calcium Ca(2+) and may act as a signal mediator to buffer Ca(2+). This Arabidopsis thaliana (Mouse-ear cress) protein is Cytosolic calcium-binding protein 2.